A 239-amino-acid polypeptide reads, in one-letter code: Probable transcriptional regulatory protein BAA_0622 (239 aa).

This sequence belongs to the TACO1 family. YeeN subfamily.

It is found in the cytoplasm. This chain is Probable transcriptional regulatory protein BAA_0622, found in Bacillus anthracis (strain A0248).